We begin with the raw amino-acid sequence, 1617 residues long: ATP-binding cassette sub-family A member 6 (1617 aa).

Residues 31-51 (LLEWGLSILLGLCIALFSSSM) traverse the membrane as a helical segment. Asparagine 84 and asparagine 109 each carry an N-linked (GlcNAc...) asparagine glycan. Transmembrane regions (helical) follow at residues 222–242 (MFILFFLLHFSPLVYFISLNV), 268–288 (GLIYAGFIFIISIFVTIIITF), 297–317 (FMVIFILFFLYGLSLVALVFL), 327–347 (LTNLVVFLLTLFWGCLGFTVF), 355–375 (LEWILNICSPFAFTTGMIQII), and 397–417 (IATFSMLLLDGLIYLLLALYF). The ABC transporter 1 domain maps to 478–713 (IRIRNVKKEY…WGLGYHLSLH (236 aa)). 514-521 (GHSGAGKS) contacts ATP. Residues 854 to 874 (VLLTLLLVFGIAIFPLIVENI) form a helical membrane-spanning segment. Asparagine 940 carries N-linked (GlcNAc...) asparagine glycosylation. Transmembrane regions (helical) follow at residues 1007–1027 (IGLWTGLPDGSFFLFLVLCSI), 1062–1082 (ALVDVSFFILILLLMYLIFYI), 1094–1114 (IVFALVIVTPGYAASLVFFIY), 1127–1147 (SGLWSFYFFFASTIMFSITLI), 1150–1170 (FDLSILITTMVLVPSYTLLGF), and 1194–1214 (ATDFLVCFIPYFQTLLFVFVL). One can recognise an ABC transporter 2 domain in the interval 1288-1513 (GQKKSCFSKR…LGKDYILELK (226 aa)). 1320–1327 (GPNGAGKS) is an ATP binding site.

It belongs to the ABC transporter superfamily. ABCA family. In terms of tissue distribution, widely expressed with higher expression in liver.

It is found in the golgi apparatus membrane. In terms of biological role, probable transporter which may play a role in macrophage lipid transport and homeostasis. This Homo sapiens (Human) protein is ATP-binding cassette sub-family A member 6 (ABCA6).